We begin with the raw amino-acid sequence, 20 residues long: Dahlein-5.3 (20 aa).

Expressed by the skin dorsal glands.

The protein localises to the secreted. Has no antimicrobial activity. Strongly inhibits the formation of NO by neuronal nitric oxide synthase at micromolar concentrations. The sequence is that of Dahlein-5.3 from Ranoidea dahlii (Dahl's aquatic frog).